A 227-amino-acid polypeptide reads, in one-letter code: Isopentenyl-diphosphate Delta-isomerase 1 (227 aa).

Lys-36 is a binding site for substrate. Residues His-40 and His-51 each coordinate Mg(2+). Residues 49–199 (LLHRAFSVFL…EIKITPWFQI (151 aa)) enclose the Nudix hydrolase domain. Positions 70 and 74 each coordinate substrate. Cys-86 is an active-site residue. Ser-87 serves as a coordination point for substrate. 2 residues coordinate Mg(2+): Glu-146 and Glu-148. Glu-148 is a catalytic residue. Residue Lys-176 is modified to N6-acetyllysine. Residues 225-227 (HRM) carry the Microbody targeting signal motif.

It belongs to the IPP isomerase type 1 family. In terms of assembly, monomer. Mg(2+) is required as a cofactor.

It localises to the peroxisome. It catalyses the reaction isopentenyl diphosphate = dimethylallyl diphosphate. Its pathway is isoprenoid biosynthesis; dimethylallyl diphosphate biosynthesis; dimethylallyl diphosphate from isopentenyl diphosphate: step 1/1. Functionally, catalyzes the 1,3-allylic rearrangement of the homoallylic substrate isopentenyl (IPP) to its highly electrophilic allylic isomer, dimethylallyl diphosphate (DMAPP). The chain is Isopentenyl-diphosphate Delta-isomerase 1 (IDI1) from Macaca fascicularis (Crab-eating macaque).